The chain runs to 485 residues: MSSIIQNPIESSYFVEDLSAVGNSQLHSGRSLTYGDRKANIDTRSGGGRRFWSNLNDSGNSFGAVPASSMNLSYGPTKSATISSKDGAMSRSSRYYVSSELKATLPSLDGRRLSKRNAANHASHHRMPDESASYRTRGEYESSSPRVPQKSLRRYYSTRTAQRLDVRRPASRSSRYSKTSDLPPSDPGRFVDDSDLTPHTDFTNRFVDSDFDPDSGVGRSSSPDQMMSRNNNLNINARMTSTSSKPYAKENQQLISSMAPVEQKNSFSTAREQYVAPALSFAEPVETQHNHMPKTTPLRGTSTVMNGSPIGPYSSSSNATGMYGVSKGHSSSTRRPFFSDVGSSQPAEEFVGSSSSHGRQQDSYIADDSDSERSYRRVRDQYLSKPRLSDKNRYSTFSEFPGQGTPSASQSNLRRSNTVRPTSFYYEKLHIKNDNPSFQALPYETTTQERKPVVKPDSIKTVKPEKKKSKGFFKKLMHKISHIFD.

Positions 1–200 are sufficient for interaction with Skb1; it reads MSSIIQNPIE…VDDSDLTPHT (200 aa). Disordered stretches follow at residues 117–230, 286–416, and 446–466; these read NAAN…MSRN, ETQH…LRRS, and TTQE…KPEK. A compositionally biased stretch (polar residues) spans 171 to 182; that stretch reads SRSSRYSKTSDL. Over residues 189–198 the composition is skewed to basic and acidic residues; that stretch reads RFVDDSDLTP. Composition is skewed to polar residues over residues 218–230 and 341–363; these read GRSS…MSRN and VGSS…QQDS. At serine 222 the chain carries Phosphoserine. The span at 371–393 shows a compositional bias: basic and acidic residues; sequence SERSYRRVRDQYLSKPRLSDKNR. Residues 394–416 are compositionally biased toward polar residues; the sequence is YSTFSEFPGQGTPSASQSNLRRS. Positions 447 to 464 are enriched in basic and acidic residues; the sequence is TQERKPVVKPDSIKTVKP. The required and sufficient for plasma membrane anchoring; lysine-rich, may bind to anionic lipids in the plasma membrane stretch occupies residues 451–485; that stretch reads KPVVKPDSIKTVKPEKKKSKGFFKKLMHKISHIFD. Position 458 is a phosphoserine (serine 458).

As to quaternary structure, interacts with Skb1.

The protein resides in the cell membrane. Its function is as follows. Acts as a membrane anchor for Skb1 in forming plasma membrane microdomains. Promotes mitotic entry by sequestering mitotic inhibitor Skb1 from its regulatory targets Cdr1 and Wee1. This is Skb1 localization factor 1 from Schizosaccharomyces pombe (strain 972 / ATCC 24843) (Fission yeast).